The following is a 609-amino-acid chain: Dihydroxy-acid dehydratase (609 aa).

A Mg(2+)-binding site is contributed by D81. Residue C122 participates in [2Fe-2S] cluster binding. 2 residues coordinate Mg(2+): D123 and K124. Position 124 is an N6-carboxylysine (K124). A [2Fe-2S] cluster-binding site is contributed by C195. Residue E491 coordinates Mg(2+). The active-site Proton acceptor is S517.

The protein belongs to the IlvD/Edd family. As to quaternary structure, homodimer. [2Fe-2S] cluster serves as cofactor. The cofactor is Mg(2+).

The catalysed reaction is (2R)-2,3-dihydroxy-3-methylbutanoate = 3-methyl-2-oxobutanoate + H2O. The enzyme catalyses (2R,3R)-2,3-dihydroxy-3-methylpentanoate = (S)-3-methyl-2-oxopentanoate + H2O. Its pathway is amino-acid biosynthesis; L-isoleucine biosynthesis; L-isoleucine from 2-oxobutanoate: step 3/4. It participates in amino-acid biosynthesis; L-valine biosynthesis; L-valine from pyruvate: step 3/4. Functionally, functions in the biosynthesis of branched-chain amino acids. Catalyzes the dehydration of (2R,3R)-2,3-dihydroxy-3-methylpentanoate (2,3-dihydroxy-3-methylvalerate) into 2-oxo-3-methylpentanoate (2-oxo-3-methylvalerate) and of (2R)-2,3-dihydroxy-3-methylbutanoate (2,3-dihydroxyisovalerate) into 2-oxo-3-methylbutanoate (2-oxoisovalerate), the penultimate precursor to L-isoleucine and L-valine, respectively. The chain is Dihydroxy-acid dehydratase from Acinetobacter baumannii (strain ACICU).